The following is a 247-amino-acid chain: Fasciclin-like arabinogalactan protein 6 (247 aa).

The first 23 residues, 1-23 (MSSSLFSYVVLLIFLFTIPYIQS), serve as a signal peptide directing secretion. The FAS1 domain maps to 36–182 (PINLTAILEA…LAVYVVDSVL (147 aa)). Asn-38, Asn-57, Asn-70, Asn-142, and Asn-153 each carry an N-linked (GlcNAc...) asparagine glycan. Low complexity predominate over residues 192–212 (TTPTGAPAPKSSTSSSDADSP). Positions 192-221 (TTPTGAPAPKSSTSSSDADSPAADDEHKSA) are disordered. Gly-222 carries GPI-anchor amidated glycine lipidation. The propeptide at 223 to 247 (SSVKRTSLGIVVSFALFCCSVIYIA) is removed in mature form.

The protein belongs to the fasciclin-like AGP family.

The protein localises to the cell membrane. May be a cell surface adhesion protein. This chain is Fasciclin-like arabinogalactan protein 6 (FLA6), found in Arabidopsis thaliana (Mouse-ear cress).